Reading from the N-terminus, the 70-residue chain is Small ribosomal subunit protein bS18 (70 aa).

The protein belongs to the bacterial ribosomal protein bS18 family. Part of the 30S ribosomal subunit. Forms a tight heterodimer with protein bS6.

Functionally, binds as a heterodimer with protein bS6 to the central domain of the 16S rRNA, where it helps stabilize the platform of the 30S subunit. This Salinibacter ruber (strain DSM 13855 / M31) protein is Small ribosomal subunit protein bS18.